The sequence spans 176 residues: Pectinesterase inhibitor 1 (176 aa).

The signal sequence occupies residues 1 to 25; it reads MAANLRNNAFLSSLMFLLLIGSSYA. Intrachain disulfides connect Cys35–Cys44 and Cys98–Cys138. An N-linked (GlcNAc...) asparagine glycan is attached at Asn154.

The protein belongs to the PMEI family. Monomer and homodimer. Interacts in vitro with PPME1. As to expression, highest expression in flowers. Expressed exclusively at the pollen tube tip.

It is found in the secreted. The protein localises to the extracellular space. It localises to the apoplast. Functionally, inhibits pectin methylesterase (PME) from flowers and siliques. Inhibits PME from leaves. This Arabidopsis thaliana (Mouse-ear cress) protein is Pectinesterase inhibitor 1.